The following is a 362-amino-acid chain: Peptide chain release factor 1 (362 aa).

Residue Gln-238 is modified to N5-methylglutamine.

The protein belongs to the prokaryotic/mitochondrial release factor family. Post-translationally, methylated by PrmC. Methylation increases the termination efficiency of RF1.

It is found in the cytoplasm. In terms of biological role, peptide chain release factor 1 directs the termination of translation in response to the peptide chain termination codons UAG and UAA. In Psychrobacter arcticus (strain DSM 17307 / VKM B-2377 / 273-4), this protein is Peptide chain release factor 1.